Consider the following 936-residue polypeptide: Isoleucine--tRNA ligase (936 aa).

The short motif at 58–68 (PYANGRAHLGT) is the 'HIGH' region element. L-isoleucyl-5'-AMP is bound at residue E561. A 'KMSKS' region motif is present at residues 602–606 (KMSKS). K605 provides a ligand contact to ATP. 4 residues coordinate Zn(2+): C899, C902, C919, and C922.

Belongs to the class-I aminoacyl-tRNA synthetase family. IleS type 1 subfamily. In terms of assembly, monomer. Zn(2+) is required as a cofactor.

It localises to the cytoplasm. The enzyme catalyses tRNA(Ile) + L-isoleucine + ATP = L-isoleucyl-tRNA(Ile) + AMP + diphosphate. Functionally, catalyzes the attachment of isoleucine to tRNA(Ile). As IleRS can inadvertently accommodate and process structurally similar amino acids such as valine, to avoid such errors it has two additional distinct tRNA(Ile)-dependent editing activities. One activity is designated as 'pretransfer' editing and involves the hydrolysis of activated Val-AMP. The other activity is designated 'posttransfer' editing and involves deacylation of mischarged Val-tRNA(Ile). This chain is Isoleucine--tRNA ligase, found in Coxiella burnetii (strain RSA 331 / Henzerling II).